The chain runs to 274 residues: Large ribosomal subunit protein uL2 (274 aa).

Disordered regions lie at residues 28 to 54 and 224 to 274; these read APHAPLLEKKSKTGGRNNNGRITTRHI and VAMN…RRRK. Over residues 263–274 the composition is skewed to basic and acidic residues; it reads KRTDKMIVRRRK.

The protein belongs to the universal ribosomal protein uL2 family. As to quaternary structure, part of the 50S ribosomal subunit. Forms a bridge to the 30S subunit in the 70S ribosome.

Functionally, one of the primary rRNA binding proteins. Required for association of the 30S and 50S subunits to form the 70S ribosome, for tRNA binding and peptide bond formation. It has been suggested to have peptidyltransferase activity; this is somewhat controversial. Makes several contacts with the 16S rRNA in the 70S ribosome. This Pseudomonas syringae pv. tomato (strain ATCC BAA-871 / DC3000) protein is Large ribosomal subunit protein uL2.